Reading from the N-terminus, the 114-residue chain is Fluoride-specific ion channel FluC 2 (114 aa).

3 helical membrane passes run 30 to 50, 57 to 77, and 88 to 108; these read FPVATFLVNVAGCLILGLLSG, TFALLGTGFCGGLTTYSTFAV, and ALPSVVYVVASVAAGLAAAWL. Residues glycine 67 and threonine 70 each contribute to the Na(+) site.

The protein belongs to the fluoride channel Fluc/FEX (TC 1.A.43) family.

The protein resides in the cell membrane. The catalysed reaction is fluoride(in) = fluoride(out). With respect to regulation, na(+) is not transported, but it plays an essential structural role and its presence is essential for fluoride channel function. Fluoride-specific ion channel. Important for reducing fluoride concentration in the cell, thus reducing its toxicity. This chain is Fluoride-specific ion channel FluC 2, found in Rhodococcus jostii (strain RHA1).